Here is a 302-residue protein sequence, read N- to C-terminus: Probable alpha-L-glutamate ligase (302 aa).

Positions 104–287 constitute an ATP-grasp domain; the sequence is LQLLSRKGLG…IAGQIIEYIE (184 aa). ATP is bound by residues lysine 141, 178-179, aspartate 187, and 211-213; these read EY and RSN. Aspartate 248, glutamate 260, and asparagine 262 together coordinate Mg(2+). 3 residues coordinate Mn(2+): aspartate 248, glutamate 260, and asparagine 262.

Belongs to the RimK family. The cofactor is Mg(2+). Mn(2+) is required as a cofactor.

This is Probable alpha-L-glutamate ligase from Chromohalobacter salexigens (strain ATCC BAA-138 / DSM 3043 / CIP 106854 / NCIMB 13768 / 1H11).